A 274-amino-acid chain; its full sequence is 2,3,4,5-tetrahydropyridine-2,6-dicarboxylate N-succinyltransferase (274 aa).

The protein belongs to the transferase hexapeptide repeat family.

It localises to the cytoplasm. It catalyses the reaction (S)-2,3,4,5-tetrahydrodipicolinate + succinyl-CoA + H2O = (S)-2-succinylamino-6-oxoheptanedioate + CoA. The protein operates within amino-acid biosynthesis; L-lysine biosynthesis via DAP pathway; LL-2,6-diaminopimelate from (S)-tetrahydrodipicolinate (succinylase route): step 1/3. This is 2,3,4,5-tetrahydropyridine-2,6-dicarboxylate N-succinyltransferase from Erwinia tasmaniensis (strain DSM 17950 / CFBP 7177 / CIP 109463 / NCPPB 4357 / Et1/99).